A 182-amino-acid polypeptide reads, in one-letter code: Isopentenyl-diphosphate Delta-isomerase (182 aa).

H25 and H32 together coordinate Mn(2+). In terms of domain architecture, Nudix hydrolase spans 30–164 (LLHLAFSSWL…PWAFSPWMVM (135 aa)). C67 is an active-site residue. H69 provides a ligand contact to Mn(2+). A Mg(2+)-binding site is contributed by E87. Mn(2+)-binding residues include E114 and E116. E116 is a catalytic residue.

The protein belongs to the IPP isomerase type 1 family. Homodimer. It depends on Mg(2+) as a cofactor. Mn(2+) is required as a cofactor.

It localises to the cytoplasm. It catalyses the reaction isopentenyl diphosphate = dimethylallyl diphosphate. Its pathway is isoprenoid biosynthesis; dimethylallyl diphosphate biosynthesis; dimethylallyl diphosphate from isopentenyl diphosphate: step 1/1. In terms of biological role, catalyzes the 1,3-allylic rearrangement of the homoallylic substrate isopentenyl (IPP) to its highly electrophilic allylic isomer, dimethylallyl diphosphate (DMAPP). The sequence is that of Isopentenyl-diphosphate Delta-isomerase from Escherichia coli O9:H4 (strain HS).